Here is a 96-residue protein sequence, read N- to C-terminus: Secretoglobin family 2B member 2 (96 aa).

The first 23 residues, 1–23 (MRVTSATCALLLALICSVQLGDA), serve as a signal peptide directing secretion.

This sequence belongs to the secretoglobin family.

It is found in the secreted. The polypeptide is Secretoglobin family 2B member 2 (SCGB2B2) (Homo sapiens (Human)).